A 113-amino-acid polypeptide reads, in one-letter code: Nascent polypeptide-associated complex protein (113 aa).

The NAC-A/B domain occupies 5–73; sequence GMNPAKMKQM…AKEVPKSLEI (69 aa).

Belongs to the NAC-alpha family. In terms of assembly, homodimer. Interacts with the ribosome. Binds ribosomal RNA.

Functionally, contacts the emerging nascent chain on the ribosome. The protein is Nascent polypeptide-associated complex protein of Methanosarcina acetivorans (strain ATCC 35395 / DSM 2834 / JCM 12185 / C2A).